We begin with the raw amino-acid sequence, 338 residues long: Biotin synthase (338 aa).

Residues 50–277 form the Radical SAM core domain; it reads QAVQLSTLMS…KSYVRLSAGR (228 aa). Cys65, Cys69, and Cys72 together coordinate [4Fe-4S] cluster. [2Fe-2S] cluster is bound by residues Cys109, Cys140, Cys200, and Arg272.

The protein belongs to the radical SAM superfamily. Biotin synthase family. Homodimer. [4Fe-4S] cluster is required as a cofactor. Requires [2Fe-2S] cluster as cofactor.

The enzyme catalyses (4R,5S)-dethiobiotin + (sulfur carrier)-SH + 2 reduced [2Fe-2S]-[ferredoxin] + 2 S-adenosyl-L-methionine = (sulfur carrier)-H + biotin + 2 5'-deoxyadenosine + 2 L-methionine + 2 oxidized [2Fe-2S]-[ferredoxin]. The protein operates within cofactor biosynthesis; biotin biosynthesis; biotin from 7,8-diaminononanoate: step 2/2. Catalyzes the conversion of dethiobiotin (DTB) to biotin by the insertion of a sulfur atom into dethiobiotin via a radical-based mechanism. The sequence is that of Biotin synthase from Actinobacillus succinogenes (strain ATCC 55618 / DSM 22257 / CCUG 43843 / 130Z).